Consider the following 167-residue polypeptide: uncharacterized protein (167 aa).

To B.subtilis XkdI.

This is an uncharacterized protein from Bacillus subtilis (strain 168).